Here is a 317-residue protein sequence, read N- to C-terminus: Flagellar hook-associated protein 3 (317 aa).

It belongs to the bacterial flagellin family.

Its subcellular location is the secreted. The protein localises to the bacterial flagellum. In Salmonella typhimurium (strain LT2 / SGSC1412 / ATCC 700720), this protein is Flagellar hook-associated protein 3 (flgL).